The primary structure comprises 481 residues: MSEELLSFEPATGEQLWRGKVSDVDAEVEIARRAWPEWAAKPVTFRTETLRRFADRVKAESEAFADLIARETGKPLWEARTEVESVANKVDISVKAYAERTPNRRIEGAMGLRSAVRHKPHGALAVLGPYNFPAHLPNGHIVPALIAGNSVVFKPSEKTPAVGAKLVELLHSAGVPQEVLRLVVGGPDTGKALAAHPGIDGLLFTGSARTGLALNRQFAGQPGKMLALEMGGNNPIVAWDTADIRTAAILIVQSAFLSAGQRCSNARRLIVKDSLADALIAEVRELANRLIVDHPHADPAPYMGPVIDNEAADGLTESFLVLMSNGGQVIRHMTRPVAGRPFLTPGIIDVTTMAERPDVELFGPLLQVIRVETFEAAIAEANNTAFGLSAALIGGTPQLYDQFWANARAGVINWNRPTNGASSAAPFGGVGLSGNHRPSAFYAADYCAYPVASAESDALRASIGVGLRDPEGSQLVTKKYL.

Residue 206 to 211 coordinates NAD(+); the sequence is GSARTG. Catalysis depends on residues Glu-229 and Cys-263.

Belongs to the aldehyde dehydrogenase family. AstD subfamily.

It catalyses the reaction N-succinyl-L-glutamate 5-semialdehyde + NAD(+) + H2O = N-succinyl-L-glutamate + NADH + 2 H(+). The protein operates within amino-acid degradation; L-arginine degradation via AST pathway; L-glutamate and succinate from L-arginine: step 4/5. Its function is as follows. Catalyzes the NAD-dependent reduction of succinylglutamate semialdehyde into succinylglutamate. The sequence is that of N-succinylglutamate 5-semialdehyde dehydrogenase from Sphingopyxis alaskensis (strain DSM 13593 / LMG 18877 / RB2256) (Sphingomonas alaskensis).